Reading from the N-terminus, the 168-residue chain is MVKDILAPGLRVVFCGINPGLSSANTGFPFAHPANRFWKVIHLAGFSDRQLKPEEAEKLLDFRCGVTKLVDRPTVQATEVKLHELRSGGRNLIDKIEDYQPAALAVLGKQAFEQGFSQRGIAWGKQKIAIGATMVWVLPNPSGLNRIKTEKLVEAYRELDQALIMRGL.

It belongs to the uracil-DNA glycosylase (UDG) superfamily. TDG/mug family. Binds DNA as a monomer.

The protein resides in the cytoplasm. The catalysed reaction is Specifically hydrolyzes mismatched double-stranded DNA and polynucleotides, releasing free uracil.. Its function is as follows. Excises ethenocytosine and uracil, which can arise by alkylation or deamination of cytosine, respectively, from the corresponding mispairs with guanine in ds-DNA. It is capable of hydrolyzing the carbon-nitrogen bond between the sugar-phosphate backbone of the DNA and the mispaired base. The complementary strand guanine functions in substrate recognition. Required for DNA damage lesion repair in stationary-phase cells. This Salmonella paratyphi B (strain ATCC BAA-1250 / SPB7) protein is G/U mismatch-specific DNA glycosylase.